The chain runs to 354 residues: Selenide, water dikinase (354 aa).

The active site involves Cys23. Residues Lys26 and Thr54–Asp56 contribute to the ATP site. Asp57 contacts Mg(2+). Residues Asp74, Asp97, and Gly145–Ser147 each bind ATP. A Mg(2+)-binding site is contributed by Asp97. Residue Asp233 coordinates Mg(2+).

Belongs to the selenophosphate synthase 1 family. Class I subfamily. Homodimer. Mg(2+) serves as cofactor.

It catalyses the reaction hydrogenselenide + ATP + H2O = selenophosphate + AMP + phosphate + 2 H(+). Functionally, synthesizes selenophosphate from selenide and ATP. This is Selenide, water dikinase from Burkholderia cenocepacia (strain ATCC BAA-245 / DSM 16553 / LMG 16656 / NCTC 13227 / J2315 / CF5610) (Burkholderia cepacia (strain J2315)).